Here is a 312-residue protein sequence, read N- to C-terminus: Putative 1-aminocyclopropane-1-carboxylate deaminase (312 aa).

Lysine 42 is subject to N6-(pyridoxal phosphate)lysine.

Belongs to the ACC deaminase/D-cysteine desulfhydrase family. The cofactor is pyridoxal 5'-phosphate.

The enzyme catalyses 1-aminocyclopropane-1-carboxylate + H2O = 2-oxobutanoate + NH4(+). The polypeptide is Putative 1-aminocyclopropane-1-carboxylate deaminase (Thermotoga maritima (strain ATCC 43589 / DSM 3109 / JCM 10099 / NBRC 100826 / MSB8)).